Here is a 265-residue protein sequence, read N- to C-terminus: Undecaprenyl-diphosphatase (265 aa).

8 consecutive transmembrane segments (helical) span residues 1–21, 39–61, 85–105, 115–135, 149–169, 187–207, 218–238, and 244–264; these read MDFI…FLPI, QGLA…YFRL, LAWA…MLTE, LIIA…DWAG, ILFI…RSGI, FSFL…ALDL, ALAL…HYFF, and IGML…FYLF.

Belongs to the UppP family.

It is found in the cell inner membrane. The catalysed reaction is di-trans,octa-cis-undecaprenyl diphosphate + H2O = di-trans,octa-cis-undecaprenyl phosphate + phosphate + H(+). Its function is as follows. Catalyzes the dephosphorylation of undecaprenyl diphosphate (UPP). Confers resistance to bacitracin. The polypeptide is Undecaprenyl-diphosphatase (Nitrosococcus oceani (strain ATCC 19707 / BCRC 17464 / JCM 30415 / NCIMB 11848 / C-107)).